The following is a 151-amino-acid chain: Linear element protein Mug20 (151 aa).

A coiled-coil region spans residues 56–140 (EEKLRALDKL…CAMEKLKMIE (85 aa)).

As to quaternary structure, component of linear elements (LinEs), which are similar to synaptonemal complexes, at least composed of rec27, rec25, rec10 and mug20. Interacts with rec10.

Its subcellular location is the cytoplasm. It is found in the nucleus. The protein localises to the chromosome. Its function is as follows. During meiotic DNA recombination, binds to and may help activate DNA double-strand break (DSB) hotspot sites. The polypeptide is Linear element protein Mug20 (Schizosaccharomyces pombe (strain 972 / ATCC 24843) (Fission yeast)).